The chain runs to 303 residues: HTH-type transcriptional regulator CatM (303 aa).

Residues 1–58 form the HTH lysR-type domain; it reads MELRHLRYFVTVVEEQSISKAAEKLCIAQPPLSRQIQKLEEELGIQLFERGFRPAKVT. The H-T-H motif DNA-binding region spans 18-37; the sequence is ISKAAEKLCIAQPPLSRQIQ. The cis,cis-muconate site is built by Ser-99 and Thr-128.

The protein belongs to the LysR transcriptional regulatory family. Homotetramer in solution.

Functionally, positively regulates the expression of catA, catBCIJFD and benPK in response to cis,cis-muconate. It binds to the catB-catM intercistronic region, to a specific sequence upstream of catA and to the benPK promoter region. Can also repress pca genes. In Acinetobacter baylyi (strain ATCC 33305 / BD413 / ADP1), this protein is HTH-type transcriptional regulator CatM (catM).